We begin with the raw amino-acid sequence, 160 residues long: MPSFDIVSEINMEEVRNATDNASRELSTRFDFRGIDASFEYKDKTVVMKAEAEFQLQQMESMFRTAMSKRNVDTSSMDVKPYDAHGKTYRQTIAFKEGIEQPTAKKIVKLIKDAKVKVQTAIQGEELRVTGKKRDDLQQAIALVKEANLGQPFQFKNFRD.

The protein belongs to the YajQ family.

Functionally, nucleotide-binding protein. The sequence is that of Nucleotide-binding protein MADE_1020535 from Alteromonas mediterranea (strain DSM 17117 / CIP 110805 / LMG 28347 / Deep ecotype).